Here is a 122-residue protein sequence, read N- to C-terminus: Large ribosomal subunit protein uL14 (122 aa).

The protein belongs to the universal ribosomal protein uL14 family. As to quaternary structure, part of the 50S ribosomal subunit. Forms a cluster with proteins L3 and L19. In the 70S ribosome, L14 and L19 interact and together make contacts with the 16S rRNA in bridges B5 and B8.

Its function is as follows. Binds to 23S rRNA. Forms part of two intersubunit bridges in the 70S ribosome. This chain is Large ribosomal subunit protein uL14, found in Mycobacterium leprae (strain TN).